Here is a 1300-residue protein sequence, read N- to C-terminus: MESTECVRVAVNIRPLITPELLNGCTDCITVAPKEPQVHIGSHTFTYDFVYGNGGYPCSEIYNHCVAPLVDALFKGYNATVLAYGQTGSGKTYTMGTNYSGDCTNGGVIPNVMEDIFRRVETTKDSSELLIRVSFIEIFKEEVFDLLDSNSSALLKNDSGVQAKHTALSRAPIQIRETASGGITLAGVTEAEVKTKEEMGSFLARGSLSRATGSTNMNSQSSRSHAIFTITLEQKKIAGGSCTTTEDGGEDILCAKLHLVDLAGSERAKRTGADGMRLKEGIHINKGLLALGNVISALGDEKKRKEGGHVPYRDSKLTRLLQDSLGGNSKTVMIACVSPADTNAEETLNTLKYANRARNIQNKAVINRDPATAQMQRMRSQIEQLQTELLFYRGDSGAFDELQILKHKISLLEASNRELHNELQERRVASEHFSKRAYDAQVEKDKLIMIIESVRNGKSLDEIESCQNEDVGLVNKYVSKIQELEGELLHIKNLKKTSNHQYSDDSYDVGPRSNNVLFPSSNESSDCEDKVMDVTDELEFQEKEIEHCSLQEKLDMELKELDKRLEEKEAEMKRFSSGGTSVLKQHYEKKVYDLEQEKRALQREIEGLRHNLASIPSGPGDGAQKLKEEYVQKLNTLETQVSVLKKKQDAQAQLMRQKQKSDDAAIKLQDEIHRIKSQKVQLQQKIKQESEQFRAWKASREKEVMQLKKEGRRNEYEMHKLMALNQKQKLVLQRKTEEASQVTKRLKELLDNRKASSRETLSGANGPGTQALMQAIEHEIEVTVRVHEVRSEYERQTEERARMAKEVARLREENELLKNAKISVHGDTMSPGARNSRIFALENMLATSSSTLVSMASQLSEAEERERVFGGRGRWNQVRTLGDAKSIMNYLFNLASTARCLARDKEADCREKDVLIRDLKEKIVKFSSYVRYMEIQKADLVHQVKAQTSAMKKLSADENLKNEHSMKKQETRNSTIVLEDMDTSDSEASDHEREDPDLDDEWKPEHESERESEQESVIKLNRKRNFKVGRRRSSVVMRRSYEENSETPSDDAVKSDVCCCTCSKSSSCKTMKCQCRATKGSCGPSCGCSSVKCSNRNADGKENNSISESEALENGENSQESDEKDKGQQQQVLASRGAMLLQNALADKPEEETNDDGGTRRRRKPLSDIGNTTGKSNVPRPSQRKKWKKTVLQLVPVGPPALPPTHTNTHLIPEANSVTVDSDTARMPENSDSGESNSIKLKLPRAMRSASSNGSNLLRERNADQNGSESGGNSGFVQSNSGRASGSRTSDEKENHTRRV.

Positions 6-360 constitute a Kinesin motor domain; that stretch reads CVRVAVNIRP…LKYANRARNI (355 aa). 85–92 provides a ligand contact to ATP; the sequence is GQTGSGKT. 3 coiled-coil regions span residues 580–615, 653–697, and 781–823; these read TSVLKQHYEKKVYDLEQEKRALQREIEGLRHNLASI, QLMR…RAWK, and EVTV…AKIS. Basic and acidic residues-rich tracts occupy residues 956–971 and 1001–1013; these read ADENLKNEHSMKKQET and EWKPEHESERESE. Disordered regions lie at residues 956 to 1018, 1097 to 1132, 1144 to 1187, and 1200 to 1300; these read ADEN…ESVI, NADGKENNSISESEALENGENSQESDEKDKGQQQQV, ALAD…RKKW, and PALP…TRRV. Polar residues-rich tracts occupy residues 1169–1180, 1205–1222, 1230–1239, and 1275–1288; these read IGNTTGKSNVPR, THTNTHLIPEANSVTVDS, NSDSGESNSI, and GFVQSNSGRASGSR. Positions 1289-1300 are enriched in basic and acidic residues; that stretch reads TSDEKENHTRRV.

The protein belongs to the TRAFAC class myosin-kinesin ATPase superfamily. Kinesin family. KIN-4 subfamily. Homodimer.

Its function is as follows. Kinesin-like motor protein involved in the control of the oriented deposition of cellulose microfibrils. The chain is Kinesin-like protein KIN-4C from Arabidopsis thaliana (Mouse-ear cress).